A 388-amino-acid polypeptide reads, in one-letter code: Succinyl-diaminopimelate desuccinylase (388 aa).

H75 contacts Zn(2+). D77 is an active-site residue. D108 provides a ligand contact to Zn(2+). E142 acts as the Proton acceptor in catalysis. Residues E143, E171, and H361 each coordinate Zn(2+).

It belongs to the peptidase M20A family. DapE subfamily. As to quaternary structure, homodimer. Zn(2+) serves as cofactor. Requires Co(2+) as cofactor.

The catalysed reaction is N-succinyl-(2S,6S)-2,6-diaminopimelate + H2O = (2S,6S)-2,6-diaminopimelate + succinate. It functions in the pathway amino-acid biosynthesis; L-lysine biosynthesis via DAP pathway; LL-2,6-diaminopimelate from (S)-tetrahydrodipicolinate (succinylase route): step 3/3. Functionally, catalyzes the hydrolysis of N-succinyl-L,L-diaminopimelic acid (SDAP), forming succinate and LL-2,6-diaminopimelate (DAP), an intermediate involved in the bacterial biosynthesis of lysine and meso-diaminopimelic acid, an essential component of bacterial cell walls. This Methylocella silvestris (strain DSM 15510 / CIP 108128 / LMG 27833 / NCIMB 13906 / BL2) protein is Succinyl-diaminopimelate desuccinylase.